Consider the following 397-residue polypeptide: ATP-dependent RNA helicase eIF4A (397 aa).

The Q motif motif lies at 23–51; that stretch reads YTFDDLNLKPNIVRGIFGYGYESPSAIQQ. Residues 54–224 form the Helicase ATP-binding domain; the sequence is ILPITEGRDV…TKFMNNPVRI (171 aa). An ATP-binding site is contributed by 67–74; it reads AQSGTGKT. Positions 172 to 175 match the DEAD box motif; the sequence is DEAD. Residues 235-396 form the Helicase C-terminal domain; it reads GIKQFYINVE…EMPADIGALF (162 aa).

It belongs to the DEAD box helicase family. eIF4A subfamily. In terms of assembly, component of the eIF4F complex, which composition varies with external and internal environmental conditions. It is composed of at least eIF4A, eIF4E and eIF4G.

The protein localises to the cytoplasm. The catalysed reaction is ATP + H2O = ADP + phosphate + H(+). In terms of biological role, ATP-dependent RNA helicase which is a subunit of the eIF4F complex involved in cap recognition and is required for mRNA binding to ribosome. In the current model of translation initiation, eIF4A unwinds RNA secondary structures in the 5'-UTR of mRNAs which is necessary to allow efficient binding of the small ribosomal subunit, and subsequent scanning for the initiator codon. The chain is ATP-dependent RNA helicase eIF4A (TIF1) from Debaryomyces hansenii (strain ATCC 36239 / CBS 767 / BCRC 21394 / JCM 1990 / NBRC 0083 / IGC 2968) (Yeast).